A 180-amino-acid chain; its full sequence is Crossover junction endodeoxyribonuclease RuvC (180 aa).

Active-site residues include D7, E66, and D138. 3 residues coordinate Mg(2+): D7, E66, and D138.

This sequence belongs to the RuvC family. In terms of assembly, homodimer which binds Holliday junction (HJ) DNA. The HJ becomes 2-fold symmetrical on binding to RuvC with unstacked arms; it has a different conformation from HJ DNA in complex with RuvA. In the full resolvosome a probable DNA-RuvA(4)-RuvB(12)-RuvC(2) complex forms which resolves the HJ. The cofactor is Mg(2+).

Its subcellular location is the cytoplasm. It carries out the reaction Endonucleolytic cleavage at a junction such as a reciprocal single-stranded crossover between two homologous DNA duplexes (Holliday junction).. Functionally, the RuvA-RuvB-RuvC complex processes Holliday junction (HJ) DNA during genetic recombination and DNA repair. Endonuclease that resolves HJ intermediates. Cleaves cruciform DNA by making single-stranded nicks across the HJ at symmetrical positions within the homologous arms, yielding a 5'-phosphate and a 3'-hydroxyl group; requires a central core of homology in the junction. The consensus cleavage sequence is 5'-(A/T)TT(C/G)-3'. Cleavage occurs on the 3'-side of the TT dinucleotide at the point of strand exchange. HJ branch migration catalyzed by RuvA-RuvB allows RuvC to scan DNA until it finds its consensus sequence, where it cleaves and resolves the cruciform DNA. The chain is Crossover junction endodeoxyribonuclease RuvC from Burkholderia lata (strain ATCC 17760 / DSM 23089 / LMG 22485 / NCIMB 9086 / R18194 / 383).